We begin with the raw amino-acid sequence, 190 residues long: Orotate phosphoribosyltransferase (190 aa).

114 to 122 contributes to the 5-phospho-alpha-D-ribose 1-diphosphate binding site; it reads EDVVTTGGS. Orotate contacts are provided by threonine 118 and arginine 146.

This sequence belongs to the purine/pyrimidine phosphoribosyltransferase family. PyrE subfamily. In terms of assembly, homodimer. It depends on Mg(2+) as a cofactor.

It catalyses the reaction orotidine 5'-phosphate + diphosphate = orotate + 5-phospho-alpha-D-ribose 1-diphosphate. It participates in pyrimidine metabolism; UMP biosynthesis via de novo pathway; UMP from orotate: step 1/2. Catalyzes the transfer of a ribosyl phosphate group from 5-phosphoribose 1-diphosphate to orotate, leading to the formation of orotidine monophosphate (OMP). The protein is Orotate phosphoribosyltransferase of Caldanaerobacter subterraneus subsp. tengcongensis (strain DSM 15242 / JCM 11007 / NBRC 100824 / MB4) (Thermoanaerobacter tengcongensis).